Here is a 54-residue protein sequence, read N- to C-terminus: Ovomucoid (54 aa).

One can recognise a Kazal-like domain in the interval 4–54 (VDCSDYPTHGCTLELKPICGSDNQTYSNKCGFCNAVAQSNGTLTLSHFGKC). 3 disulfides stabilise this stretch: cysteine 6–cysteine 36, cysteine 14–cysteine 33, and cysteine 22–cysteine 54. An N-linked (GlcNAc...) asparagine glycan is attached at asparagine 43.

Its subcellular location is the secreted. This chain is Ovomucoid, found in Aepypodius arfakianus (Wattled brush turkey).